A 163-amino-acid chain; its full sequence is S-ribosylhomocysteine lyase (163 aa).

Fe cation contacts are provided by His-54, His-58, and Cys-128.

The protein belongs to the LuxS family. Homodimer. Fe cation serves as cofactor.

The enzyme catalyses S-(5-deoxy-D-ribos-5-yl)-L-homocysteine = (S)-4,5-dihydroxypentane-2,3-dione + L-homocysteine. Involved in the synthesis of autoinducer 2 (AI-2) which is secreted by bacteria and is used to communicate both the cell density and the metabolic potential of the environment. The regulation of gene expression in response to changes in cell density is called quorum sensing. Catalyzes the transformation of S-ribosylhomocysteine (RHC) to homocysteine (HC) and 4,5-dihydroxy-2,3-pentadione (DPD). The chain is S-ribosylhomocysteine lyase from Wolinella succinogenes (strain ATCC 29543 / DSM 1740 / CCUG 13145 / JCM 31913 / LMG 7466 / NCTC 11488 / FDC 602W) (Vibrio succinogenes).